Consider the following 143-residue polypeptide: Holo-[acyl-carrier-protein] synthase (143 aa).

2 residues coordinate Mg(2+): D8 and E62.

It belongs to the P-Pant transferase superfamily. AcpS family. Mg(2+) is required as a cofactor.

The protein localises to the cytoplasm. The catalysed reaction is apo-[ACP] + CoA = holo-[ACP] + adenosine 3',5'-bisphosphate + H(+). Its function is as follows. Transfers the 4'-phosphopantetheine moiety from coenzyme A to a Ser of acyl-carrier-protein. This chain is Holo-[acyl-carrier-protein] synthase, found in Cupriavidus metallidurans (strain ATCC 43123 / DSM 2839 / NBRC 102507 / CH34) (Ralstonia metallidurans).